The primary structure comprises 1323 residues: Phosphoribosylformylglycinamidine synthase (1323 aa).

ATP contacts are provided by residues G312–D323, N391–Y393, and A691. 4 residues coordinate Mg(2+): D692, E733, N737, and D903. S905 is a binding site for ATP. The 245-residue stretch at V1062–G1306 folds into the Glutamine amidotransferase type-1 domain. Residue C1156 is the Nucleophile of the active site. Catalysis depends on residues H1284 and E1286.

It in the N-terminal section; belongs to the FGAMS family.

The protein resides in the cytoplasm. The catalysed reaction is N(2)-formyl-N(1)-(5-phospho-beta-D-ribosyl)glycinamide + L-glutamine + ATP + H2O = 2-formamido-N(1)-(5-O-phospho-beta-D-ribosyl)acetamidine + L-glutamate + ADP + phosphate + H(+). Its pathway is purine metabolism; IMP biosynthesis via de novo pathway; 5-amino-1-(5-phospho-D-ribosyl)imidazole from N(2)-formyl-N(1)-(5-phospho-D-ribosyl)glycinamide: step 1/2. Phosphoribosylformylglycinamidine synthase involved in the purines biosynthetic pathway. Catalyzes the ATP-dependent conversion of formylglycinamide ribonucleotide (FGAR) and glutamine to yield formylglycinamidine ribonucleotide (FGAM) and glutamate. The sequence is that of Phosphoribosylformylglycinamidine synthase (ade3) from Schizosaccharomyces pombe (strain 972 / ATCC 24843) (Fission yeast).